Reading from the N-terminus, the 280-residue chain is Large ribosomal subunit protein uL2 (280 aa).

Disordered regions lie at residues 1–25 (MGIRKYRPMTPGTRQRSGADFAEVT) and 230–280 (HPHG…SGRG). Positions 257–280 (KTRKRRKPSSKFIIRRRKTASGRG) are enriched in basic residues.

The protein belongs to the universal ribosomal protein uL2 family. In terms of assembly, part of the 50S ribosomal subunit. Forms a bridge to the 30S subunit in the 70S ribosome.

In terms of biological role, one of the primary rRNA binding proteins. Required for association of the 30S and 50S subunits to form the 70S ribosome, for tRNA binding and peptide bond formation. It has been suggested to have peptidyltransferase activity; this is somewhat controversial. Makes several contacts with the 16S rRNA in the 70S ribosome. This Gloeobacter violaceus (strain ATCC 29082 / PCC 7421) protein is Large ribosomal subunit protein uL2.